The chain runs to 223 residues: Lipoprotein-releasing system ATP-binding protein LolD (223 aa).

The region spanning 2–223 (IQVRNLKKTF…LRDGEIVTCA (222 aa)) is the ABC transporter domain. 38 to 45 (GVSGAGKT) serves as a coordination point for ATP.

Belongs to the ABC transporter superfamily. Lipoprotein translocase (TC 3.A.1.125) family. The complex is composed of two ATP-binding proteins (LolD) and two transmembrane proteins (LolC and LolE).

Its subcellular location is the cell inner membrane. In terms of biological role, part of the ABC transporter complex LolCDE involved in the translocation of mature outer membrane-directed lipoproteins, from the inner membrane to the periplasmic chaperone, LolA. Responsible for the formation of the LolA-lipoprotein complex in an ATP-dependent manner. The polypeptide is Lipoprotein-releasing system ATP-binding protein LolD (Syntrophus aciditrophicus (strain SB)).